Here is a 388-residue protein sequence, read N- to C-terminus: MEIHCKHDPFAAMHRHGGVNQLGGVFVNGRPLPDVVRQRIVELAHQGVRPCDISRQLRVSHGCVSKILGRYYETGSIKPGVIGGSKPKVATPKVVDKIADYKRQNPTMFAWEIRDRLLAERVCDNDTVPSVSSINRIIRTKVQQPTNQQIPPSNHSIASTGSVTQVSSVSTDSAGSSYSISGILGITSSNAETNKRKRDEGIQESPIPNGHSLPGRDFLRKQMRGDLFTQQQLDVLDRVFERQHYTDIFTSTEPIKPEQTEYSAMASLTGGLDEMKSSLTSPSSADIGGTVPGPQSYPLVTGRDLASTTLPGYPPHVPPAGQGSYSAPTLTGMVPGSDFSGSPYSHPQYSSYNDSWRFPNPGLLGSPYYYSAARGGAPPATAAAYDRH.

Positions 15 to 141 (RHGGVNQLGG…SSINRIIRTK (127 aa)) form a DNA-binding region, paired. A PAI subdomain region spans residues 18-74 (GVNQLGGVFVNGRPLPDVVRQRIVELAHQGVRPCDISRQLRVSHGCVSKILGRYYET). Positions 93-141 (KVVDKIADYKRQNPTMFAWEIRDRLLAERVCDNDTVPSVSSINRIIRTK) are RED subdomain. Over residues 143–158 (QQPTNQQIPPSNHSIA) the composition is skewed to polar residues. 2 disordered regions span residues 143–162 (QQPTNQQIPPSNHSIASTGS) and 191–217 (AETNKRKRDEGIQESPIPNGHSLPGRD).

As to expression, first detected in mid-neurula embryos in the folding neural tube. With the completion of neurulation, expression becomes localized to the midbrain/hindbrain boundary (MHB) till at least stage 40. Expression is absent from regions adjacent to the MHB. In tailbuds, weakly and transiently expressed in the developing otic vesicle from stage 21 to stage 27.

The protein resides in the nucleus. Its function is as follows. Probable transcription factor. This Xenopus laevis (African clawed frog) protein is Paired box protein Pax-5.